Reading from the N-terminus, the 542-residue chain is Carboxypeptidase Y homolog A (542 aa).

Residues 1-17 (MRVLPATLLVGAASAAV) form the signal peptide. Positions 18 to 123 (PPLQQVLGRP…KLEAYDLRIK (106 aa)) are excised as a propeptide. Intrachain disulfides connect Cys-178–Cys-418, Cys-312–Cys-326, Cys-336–Cys-359, Cys-343–Cys-352, and Cys-381–Cys-388. N-linked (GlcNAc...) asparagine glycosylation is present at Asn-209. Ser-265 is an active-site residue. Asp-457 is a catalytic residue. Residue Asn-508 is glycosylated (N-linked (GlcNAc...) asparagine). The active site involves His-519.

The protein belongs to the peptidase S10 family.

The protein localises to the vacuole. The catalysed reaction is Release of a C-terminal amino acid with broad specificity.. Vacuolar carboxypeptidase involved in degradation of small peptides. Digests preferentially peptides containing an aliphatic or hydrophobic residue in P1' position, as well as methionine, leucine or phenylalanine in P1 position of ester substrate. The sequence is that of Carboxypeptidase Y homolog A (cpyA) from Aspergillus oryzae (strain ATCC 42149 / RIB 40) (Yellow koji mold).